The primary structure comprises 347 residues: SUMO-activating enzyme subunit 1 (347 aa).

The protein belongs to the ubiquitin-activating E1 family. As to quaternary structure, heterodimer of sae1 and uba2/sae2. The heterodimer corresponds to the two domains that are encoded on a single polypeptide chain in ubiquitin-activating enzyme E1. Interacts with ube2i.

It localises to the nucleus. It functions in the pathway protein modification; protein sumoylation. Functionally, the heterodimer acts as an E1 ligase for sumo1, sumo2, and sumo3. It mediates ATP-dependent activation of sumo proteins followed by formation of a thioester bond between a sumo protein and a conserved active site cysteine residue on uba2/sae2. This chain is SUMO-activating enzyme subunit 1 (sae1), found in Xenopus tropicalis (Western clawed frog).